Here is a 125-residue protein sequence, read N- to C-terminus: Kappa-casein (125 aa).

The disordered stretch occupies residues 42–63; that stretch reads LPNIDPPTVERRPRPRPSFIAI. A glycan (O-linked (GalNAc...) threonine) is linked at Thr-97. The residue at position 104 (Ser-104) is a Phosphoserine; alternate. Ser-104 is a glycosylation site (O-linked (GalNAc...) serine; alternate). Thr-121 carries O-linked (GalNAc...) threonine glycosylation. Ser-122 bears the Phosphoserine mark.

This sequence belongs to the kappa-casein family. Mammary gland specific. Secreted in milk.

The protein resides in the secreted. In terms of biological role, kappa-casein stabilizes micelle formation, preventing casein precipitation in milk. The polypeptide is Kappa-casein (CSN3) (Lama guanicoe (Guanaco)).